The sequence spans 1438 residues: Membrane-anchored lipid-binding protein YSP2 (1438 aa).

The span at 1–17 (MRDEATRKKRSFSDGHF) shows a compositional bias: basic and acidic residues. Disordered stretches follow at residues 1 to 97 (MRDE…SHTP), 174 to 194 (KVKHTDTKNTFNSSSSENERP), 200 to 219 (QKDDSQSSSHPAIDSMSAPN), 285 to 308 (QQQHPLSQQQGPLPVSENANQNPN), 338 to 418 (TSGP…KVKF), 455 to 485 (DENNTNNNPNASSTNLSHISKSNVNNNLGPK), and 505 to 543 (SQSNLSSHRARSKTLPANKALENAVGDEGNSKRNSRYSS). The Cytoplasmic portion of the chain corresponds to 1–1277 (MRDEATRKKR…SAFSMLQQVN (1277 aa)). Phosphoserine is present on Ser13. The segment covering 18 to 29 (FKKLKLMSRKKQ) has biased composition (basic residues). Residues 30–44 (PVMERSKTTRTRKES) show a composition bias toward basic and acidic residues. Positions 45-58 (TNSAAKSSLSLRRA) are enriched in low complexity. Residues 74-97 (IGSTNEGVAGNSGSNSPAQYSHTP) show a composition bias toward polar residues. Low complexity-rich tracts occupy residues 286–298 (QQHPLSQQQGPLP) and 374–398 (PTNTSTTPLSGSLTPNNRNVNANSN). Residue Ser411 is modified to Phosphoserine. Low complexity predominate over residues 455 to 470 (DENNTNNNPNASSTNL). A compositionally biased stretch (polar residues) spans 471–485 (SHISKSNVNNNLGPK). Position 596 is a phosphoserine (Ser596). One can recognise a GRAM domain in the interval 648 to 716 (EFHTLFKDCD…KEIVQIEKKT (69 aa)). Positions 777 to 843 (SSSAFFDDSD…LGPNKHSPTT (67 aa)) are disordered. A compositionally biased stretch (acidic residues) spans 783–800 (DDSDDNDDDGDLDDDDPD). Positions 818 to 832 (NESNDLGKNQKSTNY) are enriched in polar residues. The 168-residue stretch at 851–1018 (NDHLVIEANI…EIKKILSDED (168 aa)) folds into the VASt 1 domain. At Ser1032 the chain carries Phosphoserine. In terms of domain architecture, VASt 2 spans 1059–1225 (DDTVIDEKIN…DLKKIISNAS (167 aa)). The tract at residues 1225–1257 (SSTKKKSRRRGKTVNKRKSSPSTIKNEKNEENF) is disordered. Positions 1227–1243 (TKKKSRRRGKTVNKRKS) are enriched in basic residues. Residues 1278–1298 (ITSVQGIMTIISFFICLIFFF) form a helical membrane-spanning segment. Over 1299 to 1438 (RLLFHSKNTS…DNTSATNQLL (140 aa)) the chain is Lumenal. 3 N-linked (GlcNAc...) asparagine glycosylation sites follow: Asn1306, Asn1373, and Asn1430.

Belongs to the YSP2 family.

The protein resides in the mitochondrion membrane. It localises to the endoplasmic reticulum membrane. Its function is as follows. Involved in induction of programmed cell death in response to reactive oxygen species (ROS). May be involved in sterol transfer between intracellular membranes. This is Membrane-anchored lipid-binding protein YSP2 from Saccharomyces cerevisiae (strain ATCC 204508 / S288c) (Baker's yeast).